The sequence spans 79 residues: MADAGARRPFFRRRKTCPFTGANAPKIDYKDSKLLMRYVSERGKIVPSRITAVSAKKQRELARAVKRARFLGLLPYVIR.

Belongs to the bacterial ribosomal protein bS18 family. In terms of assembly, part of the 30S ribosomal subunit. Forms a tight heterodimer with protein bS6.

Its function is as follows. Binds as a heterodimer with protein bS6 to the central domain of the 16S rRNA, where it helps stabilize the platform of the 30S subunit. The sequence is that of Small ribosomal subunit protein bS18 from Nitrobacter winogradskyi (strain ATCC 25391 / DSM 10237 / CIP 104748 / NCIMB 11846 / Nb-255).